Here is a 115-residue protein sequence, read N- to C-terminus: Ig kappa chain V region 3315 (115 aa).

The tract at residues 1 to 24 is framework-1; sequence AQIVMTQTPSSVSAAVGGTVTINC. Positions 25-37 are complementarity-determining-1; that stretch reads QSSQSVYENGRLS. The tract at residues 38–52 is framework-2; sequence WFQQKPGQPPKRLIY. The complementarity-determining-2 stretch occupies residues 53-59; that stretch reads RASTLAS. Residues 60-91 form a framework-3 region; that stretch reads GVSSRFTGSGSGTQFTLSISDVQCDDAATYYC. A complementarity-determining-3 region spans residues 92-104; the sequence is LGNYDCSSGDSFT. Positions 105–114 are framework-4; the sequence is FGGGTEVVVK.

This Oryctolagus cuniculus (Rabbit) protein is Ig kappa chain V region 3315.